A 493-amino-acid polypeptide reads, in one-letter code: Glutamyl-tRNA(Gln) amidotransferase subunit A (493 aa).

Catalysis depends on charge relay system residues Lys-79 and Ser-159. Ser-183 acts as the Acyl-ester intermediate in catalysis.

Belongs to the amidase family. GatA subfamily. As to quaternary structure, heterotrimer of A, B and C subunits.

The catalysed reaction is L-glutamyl-tRNA(Gln) + L-glutamine + ATP + H2O = L-glutaminyl-tRNA(Gln) + L-glutamate + ADP + phosphate + H(+). Its function is as follows. Allows the formation of correctly charged Gln-tRNA(Gln) through the transamidation of misacylated Glu-tRNA(Gln) in organisms which lack glutaminyl-tRNA synthetase. The reaction takes place in the presence of glutamine and ATP through an activated gamma-phospho-Glu-tRNA(Gln). The protein is Glutamyl-tRNA(Gln) amidotransferase subunit A of Sinorhizobium medicae (strain WSM419) (Ensifer medicae).